The sequence spans 413 residues: CinA-like protein (413 aa).

The protein belongs to the CinA family.

This is CinA-like protein from Geobacter sulfurreducens (strain ATCC 51573 / DSM 12127 / PCA).